A 719-amino-acid chain; its full sequence is MEEVRRHHHFIKVMVGEFARRLEIPQGFLIHIPEVDHSTFDASLPSSAKGTLQNSEGKTWPVELEKLDGHVFLTTGWAKFVEDNSLREYEFLLFRYDDNMHFMVLPFGLNACEKVIRSSGSPQGKLPCDIFCCTKRGRDGDRLTEAANSLTPSHSQVLQRTTQGHELISPQSFPDQHEVCGSKDGLDEHLSLNGPMEDDKANAIAEVMSILDVDKVTVELFCAMLVFYKWNVDAVAEDFDICRGKPQIQNLFLKHKLHFQFDIVKRKLRKFFPPDDYYSSPILESRKCSLEEPKLSNQPLQCDLTTEKCRLVDEHDLCNFSQKKRRKRGSFCSPETPRRSPRLARQNNSHDSAENTLKERSEERQPSPDSMIDQAESRSEQACLCHDKTDSGSLFQDSKKVKPAHGEVDLCEEPQHNQGENEGNLDQVNNKETDEEQIERNAVETSESFTRRGCIKSSPASCEVPACLRINELSLTWKPAEHVNPLEKVLLDIQRDNFMKTISHVQGIIRNHPSDLLTADVITVVVQKEIFKWNCCLKDRDAQRIVNALLEHARKIKEMHNFNSEMRKEEFSAKLKVHLKWQLKEVETIYTSLELDYKKATSDDNIAFSMLHDKKKKLHNLQDEITGLQQSLEMKKDEMQKLAHQVAEHESVFQKSLMERLRIKEVMKGYEQTLAEVKVQLTSTEVGSIDIEALVKVEMDNMTKEIELSKESLLNITFH.

The TF-B3 DNA-binding region spans 7–110 (HHHFIKVMVG…HFMVLPFGLN (104 aa)). Disordered regions lie at residues 328-381 (RGSF…RSEQ) and 412-443 (EEPQ…RNAV). The segment covering 351-366 (DSAENTLKERSEERQP) has biased composition (basic and acidic residues). The span at 416-430 (HNQGENEGNLDQVNN) shows a compositional bias: polar residues.

The protein localises to the nucleus. The sequence is that of B3 domain-containing protein Os03g0120900 from Oryza sativa subsp. japonica (Rice).